The sequence spans 179 residues: Large ribosomal subunit protein uL6 (179 aa).

It belongs to the universal ribosomal protein uL6 family. As to quaternary structure, part of the 50S ribosomal subunit.

Functionally, this protein binds to the 23S rRNA, and is important in its secondary structure. It is located near the subunit interface in the base of the L7/L12 stalk, and near the tRNA binding site of the peptidyltransferase center. In Rhodococcus opacus (strain B4), this protein is Large ribosomal subunit protein uL6.